The following is a 424-amino-acid chain: Protein-glutamate methylesterase/protein-glutamine glutaminase (424 aa).

The Response regulatory domain occupies 6-123 (RVLVVDDSAF…SLDDFTRQLT (118 aa)). Residue Asp57 is modified to 4-aspartylphosphate. Positions 177 to 210 (SRLSPGRSPGGKEGVAGAVSAGSTRGEAIRPGKG) are disordered. The 195-residue stretch at 229–423 (RRPGIEVVAI…PAIVALVTGA (195 aa)) folds into the CheB-type methylesterase domain. Catalysis depends on residues Ser241, His268, and Asp365.

It belongs to the CheB family. Post-translationally, phosphorylated by CheA. Phosphorylation of the N-terminal regulatory domain activates the methylesterase activity.

It is found in the cytoplasm. It catalyses the reaction [protein]-L-glutamate 5-O-methyl ester + H2O = L-glutamyl-[protein] + methanol + H(+). It carries out the reaction L-glutaminyl-[protein] + H2O = L-glutamyl-[protein] + NH4(+). Functionally, involved in chemotaxis. Part of a chemotaxis signal transduction system that modulates chemotaxis in response to various stimuli. Catalyzes the demethylation of specific methylglutamate residues introduced into the chemoreceptors (methyl-accepting chemotaxis proteins or MCP) by CheR. Also mediates the irreversible deamidation of specific glutamine residues to glutamic acid. This Moorella thermoacetica (strain ATCC 39073 / JCM 9320) protein is Protein-glutamate methylesterase/protein-glutamine glutaminase.